Here is an 86-residue protein sequence, read N- to C-terminus: Centromere protein W (86 aa).

The protein belongs to the CENP-W/WIP1 family. As to quaternary structure, heterodimer with CENPT; this dimer coassembles with CENPS-CENPX heterodimers at centromeres to form the tetrameric CENP-T-W-S-X complex, which is a subcomplex of the large constitutive centromere-associated network (CCAN, also known as the interphase centromere complex or ICEN). Interacts with NPM1.

The protein localises to the nucleus. It is found in the chromosome. Its subcellular location is the centromere. It localises to the kinetochore. The protein resides in the nucleus matrix. The protein localises to the nucleolus. Functionally, component of the CENPA-NAC (nucleosome-associated) complex, a complex that plays a central role in assembly of kinetochore proteins, mitotic progression and chromosome segregation. The CENPA-NAC complex recruits the CENPA-CAD (nucleosome distal) complex and may be involved in incorporation of newly synthesized CENPA into centromeres. Part of a nucleosome-associated complex that binds specifically to histone H3-containing nucleosomes at the centromere, as opposed to nucleosomes containing CENPA. Component of the heterotetrameric CENP-T-W-S-X complex that binds and supercoils DNA, and plays an important role in kinetochore assembly. CENPW has a fundamental role in kinetochore assembly and function. It is one of the inner kinetochore proteins, with most further proteins binding downstream. Required for normal chromosome organization and normal progress through mitosis. The polypeptide is Centromere protein W (Cenpw) (Mus musculus (Mouse)).